The sequence spans 303 residues: uncharacterized protein (303 aa).

In terms of domain architecture, Fe2OG dioxygenase spans 173–300 (KLPELLGQLN…RFTVNGWIRK (128 aa)).

The cofactor is Fe(2+). Requires L-ascorbate as cofactor.

This is an uncharacterized protein from Synechocystis sp. (strain ATCC 27184 / PCC 6803 / Kazusa).